The sequence spans 147 residues: UPF0306 protein YhbP (147 aa).

The protein belongs to the UPF0306 family.

This chain is UPF0306 protein YhbP, found in Salmonella schwarzengrund (strain CVM19633).